A 319-amino-acid polypeptide reads, in one-letter code: Thioredoxin reductase (319 aa).

FAD is bound by residues 11–14 (SGPA), 40–41 (IA), glutamine 45, asparagine 54, cysteine 145, aspartate 288, and 295–297 (RQA). The cysteines at positions 142 and 145 are disulfide-linked.

Belongs to the class-II pyridine nucleotide-disulfide oxidoreductase family. In terms of assembly, homodimer. The cofactor is FAD.

Its subcellular location is the cytoplasm. It catalyses the reaction [thioredoxin]-dithiol + NADP(+) = [thioredoxin]-disulfide + NADPH + H(+). This chain is Thioredoxin reductase (TRR1), found in Candida glabrata (strain ATCC 2001 / BCRC 20586 / JCM 3761 / NBRC 0622 / NRRL Y-65 / CBS 138) (Yeast).